We begin with the raw amino-acid sequence, 706 residues long: Phosphatase and actin regulator 4 (706 aa).

One copy of the RPEL 1 repeat lies at 42-67 (EVLERKISMRKPREELVKRGLLVEVP). 4 disordered regions span residues 65–123 (EVPE…QPCA), 196–380 (VHPR…HIPV), 385–404 (VPMLTLAPPNTEVEKEQSAS), and 459–579 (LKVP…REEW). The segment covering 106 to 121 (DSTGSRPKSGETTVQP) has biased composition (polar residues). The span at 200–211 (HLSEKNSEKYRP) shows a compositional bias: basic and acidic residues. The segment covering 266–276 (DPSTRQQSSVP) has biased composition (polar residues). The segment covering 290–299 (KQPPVPPPKP) has biased composition (pro residues). Acidic residues-rich tracts occupy residues 463 to 476 (DDDDDDNSLEDESL), 508 to 523 (QEEEEEEEEGVSDTDS), and 531 to 541 (EDDEEEEEEET). Over residues 563–579 (GPHDSNPEFPQRSREEW) the composition is skewed to basic and acidic residues. 2 RPEL repeats span residues 588-613 (SQLNRRLSQRPSAEELEQRNILQKNE) and 625-650 (RRLTRKLSQRPTVAELVERKILRFNE).

It belongs to the phosphatase and actin regulator family. In terms of assembly, binds ppp1ca and actin.

Its subcellular location is the cytoplasm. It localises to the cell projection. The protein localises to the lamellipodium. Regulator of protein phosphatase 1 (PP1) required for neural tube and optic fissure closure, and enteric neural crest cell (ENCCs) migration during development. Acts as an activator of PP1. During neural tube closure, localizes to the ventral neural tube and activates PP1, leading to down-regulate cell proliferation within cranial neural tissue and the neural retina. Also acts as a regulator of migration of enteric neural crest cells (ENCCs) by activating PP1, leading to repression of the integrin signaling through the rho/rock pathway. The sequence is that of Phosphatase and actin regulator 4 (phactr4) from Xenopus tropicalis (Western clawed frog).